The primary structure comprises 256 residues: Imidazole glycerol phosphate synthase subunit HisF (256 aa).

Catalysis depends on residues aspartate 11 and aspartate 130.

The protein belongs to the HisA/HisF family. As to quaternary structure, heterodimer of HisH and HisF.

The protein resides in the cytoplasm. It carries out the reaction 5-[(5-phospho-1-deoxy-D-ribulos-1-ylimino)methylamino]-1-(5-phospho-beta-D-ribosyl)imidazole-4-carboxamide + L-glutamine = D-erythro-1-(imidazol-4-yl)glycerol 3-phosphate + 5-amino-1-(5-phospho-beta-D-ribosyl)imidazole-4-carboxamide + L-glutamate + H(+). It functions in the pathway amino-acid biosynthesis; L-histidine biosynthesis; L-histidine from 5-phospho-alpha-D-ribose 1-diphosphate: step 5/9. In terms of biological role, IGPS catalyzes the conversion of PRFAR and glutamine to IGP, AICAR and glutamate. The HisF subunit catalyzes the cyclization activity that produces IGP and AICAR from PRFAR using the ammonia provided by the HisH subunit. The sequence is that of Imidazole glycerol phosphate synthase subunit HisF from Cupriavidus necator (strain ATCC 17699 / DSM 428 / KCTC 22496 / NCIMB 10442 / H16 / Stanier 337) (Ralstonia eutropha).